Here is a 664-residue protein sequence, read N- to C-terminus: Macrolide export ATP-binding/permease protein MacB (664 aa).

The region spanning 8 to 246 is the ABC transporter domain; it reads LEVHNLVREF…ELNKDPDAAP (239 aa). 44 to 51 serves as a coordination point for ATP; sequence GQSGSGKS. The next 4 membrane-spanning stretches (helical) occupy residues 287–307, 543–563, 587–607, and 629–649; these read FLTM…VALG, IAVI…LVSV, FLIE…LLSL, and SIVA…FLPA.

The protein belongs to the ABC transporter superfamily. Macrolide exporter (TC 3.A.1.122) family. Homodimer. Part of the tripartite efflux system MacAB-TolC, which is composed of an inner membrane transporter, MacB, a periplasmic membrane fusion protein, MacA, and an outer membrane component, TolC. The complex forms a large protein conduit and can translocate molecules across both the inner and outer membranes. Interacts with MacA.

Its subcellular location is the cell inner membrane. Functionally, part of the tripartite efflux system MacAB-TolC. MacB is a non-canonical ABC transporter that contains transmembrane domains (TMD), which form a pore in the inner membrane, and an ATP-binding domain (NBD), which is responsible for energy generation. Confers resistance against macrolides. The protein is Macrolide export ATP-binding/permease protein MacB of Acinetobacter baylyi (strain ATCC 33305 / BD413 / ADP1).